The primary structure comprises 330 residues: Ferredoxin--NADP reductase (330 aa).

Residues Thr18, Glu37, Gln45, Tyr50, Val90, Phe124, Asp286, and Thr327 each contribute to the FAD site.

It belongs to the ferredoxin--NADP reductase type 2 family. In terms of assembly, homodimer. The cofactor is FAD.

The catalysed reaction is 2 reduced [2Fe-2S]-[ferredoxin] + NADP(+) + H(+) = 2 oxidized [2Fe-2S]-[ferredoxin] + NADPH. The protein is Ferredoxin--NADP reductase of Halalkalibacterium halodurans (strain ATCC BAA-125 / DSM 18197 / FERM 7344 / JCM 9153 / C-125) (Bacillus halodurans).